We begin with the raw amino-acid sequence, 537 residues long: Atrial natriuretic peptide receptor 3 (537 aa).

Residues 1-20 form the signal peptide; it reads MPSLLVLTFSACVLLGWALL. A propeptide spanning residues 21–41 is cleaved from the precursor; it reads ADCTGGGGSGGAGPGRGRRER. Topologically, residues 42 to 477 are extracellular; the sequence is EALPPQKIEV…PCKASGGLEE (436 aa). A glycan (N-linked (GlcNAc...) asparagine) is linked at asparagine 82. Cystine bridges form between cysteine 104–cysteine 132 and cysteine 209–cysteine 257. 2 N-linked (GlcNAc...) asparagine glycosylation sites follow: asparagine 289 and asparagine 390. A helical membrane pass occupies residues 478-500; the sequence is SAVTGIVVGALLGAGLLMAFYFF. Over 501–537 the chain is Cytoplasmic; it reads RKKYRITIERRNQQEESNVGKHRELREDSIRSHFSVA.

This sequence belongs to the ANF receptor family. In terms of assembly, homodimer; disulfide-linked. Interacts with OSTN.

It is found in the cell membrane. Functionally, receptor for the natriuretic peptide hormones, binding with similar affinities atrial natriuretic peptide NPPA/ANP, brain natriuretic peptide NPPB/BNP, and C-type natriuretic peptide NPPC/CNP. May function as a clearance receptor for NPPA, NPPB and NPPC, regulating their local concentrations and effects. Acts as a regulator of osteoblast differentiation and bone growth by binding to its ligand osteocrin, thereby preventing binding between NPR3/NPR-C and natriuretic peptides, leading to increase cGMP production. The chain is Atrial natriuretic peptide receptor 3 (NPR3) from Bos taurus (Bovine).